The following is a 466-amino-acid chain: Ankyrin repeat and SOCS box protein 18 (466 aa).

ANK repeat units follow at residues 119–148 (ELTT…DPDA), 151–180 (GGRG…DPDL), 184–213 (EGLA…SVQR), 218–247 (GRDT…HVDA), 251–288 (RGET…EADA), and 292–321 (DERS…DAGA). Residues 405-463 (QMHKPFYQSLFALALTPRCLQHLCRCALRRLFGKRCFDLIPLLPLPKPLQNYLLLEPQG) enclose the SOCS box domain.

The protein belongs to the ankyrin SOCS box (ASB) family.

It functions in the pathway protein modification; protein ubiquitination. May be a substrate-recognition component of a SCF-like ECS (Elongin-Cullin-SOCS-box protein) E3 ubiquitin-protein ligase complex which mediates the ubiquitination and subsequent proteasomal degradation of target proteins. The polypeptide is Ankyrin repeat and SOCS box protein 18 (ASB18) (Homo sapiens (Human)).